Here is a 288-residue protein sequence, read N- to C-terminus: uncharacterized protein (288 aa).

An N-terminal signal peptide occupies residues 1 to 27; the sequence is MKFEFRTLVLISLAVVVVLSGCSQSPS. The segment at 144–167 is disordered; that stretch reads GESGEAGGAGEQLPASDQASGEEP.

This is an uncharacterized protein from Archaeoglobus fulgidus (strain ATCC 49558 / DSM 4304 / JCM 9628 / NBRC 100126 / VC-16).